Consider the following 301-residue polypeptide: B3 domain-containing protein At5g18090 (301 aa).

The segment at residues 18 to 113 (FFKILRSADL…CFTVDIYQID (96 aa)) is a DNA-binding region (TF-B3 1). Disordered regions lie at residues 123–142 (SATIASSSGRNKREQRNNIY) and 153–194 (SWSE…KMKV). Residues 133–142 (NKREQRNNIY) show a composition bias toward basic and acidic residues. Residues 209-301 (VPEFTLTIKK…PTEMLVRVSK (93 aa)) constitute a DNA-binding region (TF-B3 2).

The protein resides in the nucleus. This Arabidopsis thaliana (Mouse-ear cress) protein is B3 domain-containing protein At5g18090.